Here is a 273-residue protein sequence, read N- to C-terminus: MALPLPPGLTQNEVAFLAEMEMVTVVPRQRLDSIDLLGGKTPQLRPPHRAQLPLWLALLLKKQRRANIVPPAWMHPASLAEIIHRETKEDPEAFSPPPPPPSRALYSQPGTARRLNPSYLDDFTQTQQDSQQDPNSILSPPFLPSNVAESPAGYLPYHWLEVAEALLTHAGDDMPAPAGEVRSLLRDLVEVRAAKMRSSTSALEGFGDAYLTLRGVGAMELAENRAFLAGLVDGVRKIGASAEATRREEEEEARRGGDYGGDGDEDSDEDMGL.

2 disordered regions span residues 88-110 and 240-273; these read KEDPEAFSPPPPPPSRALYSQPG and ASAEATRREEEEEARRGGDYGGDGDEDSDEDMGL. The segment covering 244 to 257 has biased composition (basic and acidic residues); it reads ATRREEEEEARRGG. Residues 261–273 are compositionally biased toward acidic residues; the sequence is GDGDEDSDEDMGL.

The protein belongs to the GINS2/PSF2 family. In terms of assembly, component of the GINS complex which is a heterotetramer of div-26/sld5, drc-1/psf1, drc-2/psf2 and drc-3/psf3.

It is found in the nucleus. Functionally, the GINS complex plays an essential role in the initiation of DNA replication. Has a role in chromosome segregation. This chain is DNA replication complex GINS protein psf2 (drc-2), found in Neurospora crassa (strain ATCC 24698 / 74-OR23-1A / CBS 708.71 / DSM 1257 / FGSC 987).